The sequence spans 255 residues: Taurine import ATP-binding protein TauB (255 aa).

The region spanning Leu-2–Ser-229 is the ABC transporter domain. ATP is bound at residue Gly-34–Thr-41.

It belongs to the ABC transporter superfamily. Taurine importer (TC 3.A.1.17.1) family. As to quaternary structure, the complex is composed of two ATP-binding proteins (TauB), two transmembrane proteins (TauC) and a solute-binding protein (TauA).

It is found in the cell inner membrane. The catalysed reaction is taurine(out) + ATP + H2O = taurine(in) + ADP + phosphate + H(+). In terms of biological role, part of the ABC transporter complex TauABC involved in taurine import. Responsible for energy coupling to the transport system. In Shigella dysenteriae serotype 1 (strain Sd197), this protein is Taurine import ATP-binding protein TauB.